A 429-amino-acid chain; its full sequence is Enolase (429 aa).

Residue Q163 participates in (2R)-2-phosphoglycerate binding. The active-site Proton donor is E205. Mg(2+) contacts are provided by D242, E286, and D313. Residues K338, R367, S368, and K389 each contribute to the (2R)-2-phosphoglycerate site. Catalysis depends on K338, which acts as the Proton acceptor.

It belongs to the enolase family. Mg(2+) is required as a cofactor.

It localises to the cytoplasm. Its subcellular location is the secreted. The protein localises to the cell surface. The catalysed reaction is (2R)-2-phosphoglycerate = phosphoenolpyruvate + H2O. The protein operates within carbohydrate degradation; glycolysis; pyruvate from D-glyceraldehyde 3-phosphate: step 4/5. Catalyzes the reversible conversion of 2-phosphoglycerate (2-PG) into phosphoenolpyruvate (PEP). It is essential for the degradation of carbohydrates via glycolysis. This Citrifermentans bemidjiense (strain ATCC BAA-1014 / DSM 16622 / JCM 12645 / Bem) (Geobacter bemidjiensis) protein is Enolase.